Here is a 346-residue protein sequence, read N- to C-terminus: Phenylalanine--tRNA ligase alpha subunit (346 aa).

Glu-259 is a binding site for Mg(2+).

The protein belongs to the class-II aminoacyl-tRNA synthetase family. Phe-tRNA synthetase alpha subunit type 1 subfamily. As to quaternary structure, tetramer of two alpha and two beta subunits. Mg(2+) is required as a cofactor.

The protein localises to the cytoplasm. It catalyses the reaction tRNA(Phe) + L-phenylalanine + ATP = L-phenylalanyl-tRNA(Phe) + AMP + diphosphate + H(+). This Lactococcus lactis subsp. lactis (strain IL1403) (Streptococcus lactis) protein is Phenylalanine--tRNA ligase alpha subunit.